Reading from the N-terminus, the 628-residue chain is ATP-dependent zinc metalloprotease FtsH 4 (628 aa).

Over 1–14 (MAIKPQPQWQRRLA) the chain is Cytoplasmic. A helical transmembrane segment spans residues 15–35 (SVLLWGSTIYLLVNLLAPALF). Residues 36–119 (RSQPPQVPYS…AAAPPAKNSW (84 aa)) are Lumenal-facing. A helical transmembrane segment spans residues 120-140 (FGTLLSWVIPPLIFVGIWSFF). Over 141–628 (LNRNNNGAPG…QVQAPGTLVV (488 aa)) the chain is Cytoplasmic. 214–221 (GPPGTGKT) serves as a coordination point for ATP. His438 contacts Zn(2+). The active site involves Glu439. Residues His442 and Asp515 each coordinate Zn(2+).

This sequence in the central section; belongs to the AAA ATPase family. It in the C-terminal section; belongs to the peptidase M41 family. Homohexamer. Zn(2+) serves as cofactor.

It localises to the cellular thylakoid membrane. In terms of biological role, acts as a processive, ATP-dependent zinc metallopeptidase for both cytoplasmic and membrane proteins. Plays a role in the quality control of integral membrane proteins. The chain is ATP-dependent zinc metalloprotease FtsH 4 from Synechocystis sp. (strain ATCC 27184 / PCC 6803 / Kazusa).